The chain runs to 383 residues: S-adenosylmethionine synthase (383 aa).

Residue histidine 16 participates in ATP binding. Aspartate 18 lines the Mg(2+) pocket. Residue glutamate 44 participates in K(+) binding. 2 residues coordinate L-methionine: glutamate 57 and glutamine 98. The flexible loop stretch occupies residues 98–108; it reads QSPDIAMGVDI. Residues 158–160, 226–227, aspartate 235, 241–242, alanine 258, and lysine 262 contribute to the ATP site; these read DQK, RF, and RK. Residue aspartate 235 participates in L-methionine binding. Lysine 266 is an L-methionine binding site.

This sequence belongs to the AdoMet synthase family. As to quaternary structure, homotetramer; dimer of dimers. Mg(2+) serves as cofactor. Requires K(+) as cofactor.

The protein resides in the cytoplasm. The enzyme catalyses L-methionine + ATP + H2O = S-adenosyl-L-methionine + phosphate + diphosphate. It functions in the pathway amino-acid biosynthesis; S-adenosyl-L-methionine biosynthesis; S-adenosyl-L-methionine from L-methionine: step 1/1. Its function is as follows. Catalyzes the formation of S-adenosylmethionine (AdoMet) from methionine and ATP. The overall synthetic reaction is composed of two sequential steps, AdoMet formation and the subsequent tripolyphosphate hydrolysis which occurs prior to release of AdoMet from the enzyme. This Fusobacterium nucleatum subsp. nucleatum (strain ATCC 25586 / DSM 15643 / BCRC 10681 / CIP 101130 / JCM 8532 / KCTC 2640 / LMG 13131 / VPI 4355) protein is S-adenosylmethionine synthase.